A 612-amino-acid polypeptide reads, in one-letter code: Breast cancer type 1 susceptibility protein homolog (612 aa).

An RING-type zinc finger spans residues 21-61; the sequence is CGICCSTYKDPILSTCFHIFCRSCINACFERKRKVQCPICR. Residues 140–173 form a disordered region; it reads RRKRPSRPQPPSAFAEEPAEPVEPPEPATKQPVE. 2 consecutive BRCT domains span residues 415-477 and 505-603; these read RFAE…DYTI and EHGK…PYKA.

In terms of assembly, heterodimer (via RING-type zinc finger) with brd-1 to form the core CeBCD complex. Brc-1-brd-1 heterodimer-containing CeBCD complexes bound to chromatin are activated as an E3-ubiquitin ligase in response to DNA damage. The heterodimer interacts with the recombinase rad-51 following ionizing irradiation; the interaction is direct. The heterodimer interacts the E2-ubiquitin-conjugating enzyme let-70 following ionizing irradiation. The heterodimer interacts with the pro-crossover proteins msh-5 and syp-3. In terms of processing, phosphorylation of CeBCD complexes is required for E3 ubiquitin-protein ligase activity.

Its subcellular location is the nucleus. The protein resides in the chromosome. It localises to the cytoplasm. It carries out the reaction S-ubiquitinyl-[E2 ubiquitin-conjugating enzyme]-L-cysteine + [acceptor protein]-L-lysine = [E2 ubiquitin-conjugating enzyme]-L-cysteine + N(6)-ubiquitinyl-[acceptor protein]-L-lysine.. Its pathway is protein modification; protein ubiquitination. Its activity is regulated as follows. E3 ubiquitin-protein ligase activity of CeBCD complexes occurs at DNA damage sites. Following DNA damage, E3 ubiquitin-protein ligase activity is reduced by caffeine treatment (inhibitor of ATM and ATK kinase activity). In terms of biological role, E3 ubiquitin-protein ligase that specifically mediates the formation of polyubiquitin chains and plays a central role in DNA repair. Plays a role in triggering cellular responses at damage sites in response to DNA damage that may be induced by UV and ionizing radiation for example. Functions in double-strand break repair, and is required for homologous recombination between sister chromatids in meiotic and mitotic cells. In particular, protects against chromosome non-disjunction and nuclear fragmentation during meiotic double-strand break repair to ensure sister chromatid recombination and aid chromosome stability. Required for normal cell cycle progression. Along with brap-2 modulates the expression of cell cycle arrest protein cki-1 in response to increased levels of reactive oxygen species. Constituent of the CeBCD complex that possesses E3 ubiquitin-protein ligase activity. When bound to chromatin, the brc-1-brd-1 heterodimer within the CeBCD complex is inactive during normal conditions, but in response to DNA damage, the brc-1-brd-1 heterodimer associates with other proteins such as the recombinase rad-51 or the E2-ubiquitin-conjugating enzyme let-70, which activate the CeBCD complex as an E3-ubiquitin ligase. Moreover, association between the brc-1-brd-1 heterodimer and rad-51 and let-70, probably requires DNA checkpoint proteins such as atl-1 and mre-11 in order to induce ubiquitination at DNA damage sites. To this end, the brc-1-brd-1 heterodimer coordinates a diverse range of cellular pathways such as DNA damage repair, ubiquitination and transcriptional regulation to maintain genomic stability. The protein is Breast cancer type 1 susceptibility protein homolog of Caenorhabditis elegans.